Consider the following 218-residue polypeptide: NAD(P)H-quinone oxidoreductase subunit I (218 aa).

4Fe-4S ferredoxin-type domains follow at residues 55–84 and 95–124; these read GRIHYEFDKCIACEVCVRVCPINLPVVDWV and RNYSIDFGVCIFCGNCVEYCPTNCLSMTEE. The [4Fe-4S] cluster site is built by C64, C67, C70, C74, C104, C107, C110, and C114. The interval 169–218 is disordered; the sequence is MDPHDVPANQPRAGQLPAEALKSLSLQQESVQGDEGESLQDASDQDQPSG. The segment covering 208–218 has biased composition (polar residues); that stretch reads QDASDQDQPSG.

Belongs to the complex I 23 kDa subunit family. NDH-1 is composed of at least 11 different subunits. [4Fe-4S] cluster serves as cofactor.

The protein localises to the cellular thylakoid membrane. It carries out the reaction a plastoquinone + NADH + (n+1) H(+)(in) = a plastoquinol + NAD(+) + n H(+)(out). The catalysed reaction is a plastoquinone + NADPH + (n+1) H(+)(in) = a plastoquinol + NADP(+) + n H(+)(out). NDH-1 shuttles electrons from an unknown electron donor, via FMN and iron-sulfur (Fe-S) centers, to quinones in the respiratory and/or the photosynthetic chain. The immediate electron acceptor for the enzyme in this species is believed to be plastoquinone. Couples the redox reaction to proton translocation, and thus conserves the redox energy in a proton gradient. The protein is NAD(P)H-quinone oxidoreductase subunit I of Prochlorococcus marinus (strain MIT 9313).